Reading from the N-terminus, the 575-residue chain is Beta-amylase (575 aa).

The N-terminal stretch at 1-36 is a signal peptide; sequence MLHSQKRIWKKIGLCLLSFILGITVFTGSFGSKAEA. D77 serves as a coordination point for substrate. Residues E84 and D88 each contribute to the Ca(2+) site. H117 and D125 together coordinate substrate. A disulfide bridge connects residues C119 and C127. Residue E171 coordinates Ca(2+). The active-site Proton donor is E199. The substrate site is built by K315, H320, and T358. E395 acts as the Proton acceptor in catalysis. Residues 396 to 397 and R424 contribute to the substrate site; that span reads NA.

The protein belongs to the glycosyl hydrolase 14 family. As to quaternary structure, monomer. The cofactor is Ca(2+).

The catalysed reaction is Hydrolysis of (1-&gt;4)-alpha-D-glucosidic linkages in polysaccharides so as to remove successive maltose units from the non-reducing ends of the chains.. This Niallia circulans (Bacillus circulans) protein is Beta-amylase.